We begin with the raw amino-acid sequence, 353 residues long: Phospho-furanose lactonase (353 aa).

Zn(2+) contacts are provided by His25, His27, Lys153, His186, and His214. Lys153 is modified (N6-carboxylysine). Residue Lys244–Tyr245 participates in substrate binding. Asp272 provides a ligand contact to Zn(2+). Arg275–Tyr278 provides a ligand contact to substrate.

The protein belongs to the metallo-dependent hydrolases superfamily. Phosphotriesterase family. The cofactor is Zn(2+).

The enzyme catalyses a 1,4-lactone + H2O = a 4-hydroxyacid + H(+). The catalysed reaction is D-xylono-1,4-lactone 5-phosphate + H2O = 5-phospho-D-xylonate + H(+). It carries out the reaction L-arabino-1,4-lactone 5-phosphate + H2O = 5-phospho-L-arabinonate + H(+). Functionally, catalyzes the hydrolysis of D-xylono-1,4-lactone-5-phosphate and L-arabino-1,4-lactone-5-phosphate. Also able to hydrolyze carboxy 1,4-lactones. The chain is Phospho-furanose lactonase from Mycoplasmopsis agalactiae (strain NCTC 10123 / CIP 59.7 / PG2) (Mycoplasma agalactiae).